The sequence spans 177 residues: MKRRSYAMLRAAAALAVLVVASPAWAELRGEVVRIIDGDTIDVLVDKQPVRVRLVDIDAPEKRQAFGERARQALAGMVFRRHVLVDEKDTDRYGRTLGTVWVNMELASRPPQPRNVNAAMVHQGMAWAYRFHGRAADPEMLRLEQEARGKRVGLWSDPHAVEPWKWRRESNNRRDEG.

The N-terminal stretch at 1 to 26 (MKRRSYAMLRAAAALAVLVVASPAWA) is a signal peptide. The TNase-like domain maps to 27–157 (ELRGEVVRII…RGKRVGLWSD (131 aa)). Active-site residues include arginine 53, glutamate 61, and arginine 95.

In terms of assembly, monomer. Ca(2+) is required as a cofactor. In terms of processing, the N-terminus is blocked.

It localises to the secreted. With respect to regulation, endonuclease activity is inhibited by EDTA. Its function is as follows. Involved in plasmid partition. An endonuclease that acts on supercoiled dsDNA, converting it first to open circular DNA and then linearizing it. Preferentially cleaves regions in dsDNA that are capable of forming ssDNA, such as AT-rich regions and sequences that can form cruciforms. Has poor endonucleolytic activity on linear DNA, has 5'-3' exonuclease activity on dsDNA cleaving generating 3'-phosphonucleotides. The chain is Protein ParB from Escherichia coli.